Consider the following 397-residue polypeptide: DnaJ homolog subfamily A member 4 (397 aa).

The J domain maps to 4 to 70 (ETQYYDILGV…RDVYDQGGEQ (67 aa)). Serine 18 carries the phosphoserine modification. The CR-type zinc finger occupies 122 to 206 (GVTKKLALQK…CSGAKVIREK (85 aa)). The Zn(2+) site is built by cysteine 135, cysteine 138, cysteine 151, cysteine 154, cysteine 178, cysteine 181, cysteine 194, and cysteine 197. CXXCXGXG motif repeat units lie at residues 135 to 142 (CEKCEGVG), 151 to 158 (CPLCKGRG), 178 to 185 (CIECKGQG), and 194 to 201 (CESCSGAK). Position 394 is a cysteine methyl ester (cysteine 394). Cysteine 394 carries S-farnesyl cysteine lipidation. Residues 395–397 (QTA) constitute a propeptide, removed in mature form.

Its subcellular location is the membrane. The polypeptide is DnaJ homolog subfamily A member 4 (DNAJA4) (Homo sapiens (Human)).